The following is a 478-amino-acid chain: Bifunctional protein HldE (478 aa).

Residues 1–318 are ribokinase; it reads MKVTLPDFRQ…ENAIRGRADT (318 aa). Residue 195-198 coordinates ATP; the sequence is NLSE. The active site involves aspartate 264. The segment at 344–478 is cytidylyltransferase; sequence MTNGCFDILH…NTIKANASKS (135 aa).

This sequence in the N-terminal section; belongs to the carbohydrate kinase PfkB family. In the C-terminal section; belongs to the cytidylyltransferase family. As to quaternary structure, homodimer.

It catalyses the reaction D-glycero-beta-D-manno-heptose 7-phosphate + ATP = D-glycero-beta-D-manno-heptose 1,7-bisphosphate + ADP + H(+). The catalysed reaction is D-glycero-beta-D-manno-heptose 1-phosphate + ATP + H(+) = ADP-D-glycero-beta-D-manno-heptose + diphosphate. The protein operates within nucleotide-sugar biosynthesis; ADP-L-glycero-beta-D-manno-heptose biosynthesis; ADP-L-glycero-beta-D-manno-heptose from D-glycero-beta-D-manno-heptose 7-phosphate: step 1/4. Its pathway is nucleotide-sugar biosynthesis; ADP-L-glycero-beta-D-manno-heptose biosynthesis; ADP-L-glycero-beta-D-manno-heptose from D-glycero-beta-D-manno-heptose 7-phosphate: step 3/4. Functionally, catalyzes the phosphorylation of D-glycero-D-manno-heptose 7-phosphate at the C-1 position to selectively form D-glycero-beta-D-manno-heptose-1,7-bisphosphate. Its function is as follows. Catalyzes the ADP transfer from ATP to D-glycero-beta-D-manno-heptose 1-phosphate, yielding ADP-D-glycero-beta-D-manno-heptose. The sequence is that of Bifunctional protein HldE from Pectobacterium carotovorum subsp. carotovorum (strain PC1).